A 428-amino-acid chain; its full sequence is Serine--tRNA ligase (428 aa).

235-237 is a binding site for L-serine; the sequence is TAE. 266–268 contacts ATP; sequence RSE. Glu-289 contacts L-serine. An ATP-binding site is contributed by 353–356; the sequence is EISS. L-serine is bound at residue Ser-389.

The protein belongs to the class-II aminoacyl-tRNA synthetase family. Type-1 seryl-tRNA synthetase subfamily. As to quaternary structure, homodimer. The tRNA molecule binds across the dimer.

The protein localises to the cytoplasm. It catalyses the reaction tRNA(Ser) + L-serine + ATP = L-seryl-tRNA(Ser) + AMP + diphosphate + H(+). The enzyme catalyses tRNA(Sec) + L-serine + ATP = L-seryl-tRNA(Sec) + AMP + diphosphate + H(+). It participates in aminoacyl-tRNA biosynthesis; selenocysteinyl-tRNA(Sec) biosynthesis; L-seryl-tRNA(Sec) from L-serine and tRNA(Sec): step 1/1. Its function is as follows. Catalyzes the attachment of serine to tRNA(Ser). Is also able to aminoacylate tRNA(Sec) with serine, to form the misacylated tRNA L-seryl-tRNA(Sec), which will be further converted into selenocysteinyl-tRNA(Sec). The chain is Serine--tRNA ligase from Shewanella frigidimarina (strain NCIMB 400).